A 514-amino-acid polypeptide reads, in one-letter code: Serine/threonine-protein kinase 33 (514 aa).

The segment covering 65 to 86 (INRDITSRKDLPSRTSNVERKA) has biased composition (basic and acidic residues). The segment at 65–91 (INRDITSRKDLPSRTSNVERKASQQQW) is disordered. Residues 116 to 381 (YTFGRILGKG…AKELLDNQWL (266 aa)) enclose the Protein kinase domain. Residues 122 to 130 (LGKGSFGIV) and K145 contribute to the ATP site. The active-site Proton acceptor is the D238. Disordered regions lie at residues 402–468 (KNNP…DMCS) and 485–514 (MEKTPVTPSQGTATKYPAKSGALSRTKKKL). S407 is subject to Phosphoserine. The span at 413–426 (TEEKNKPSTEEKLK) shows a compositional bias: basic and acidic residues. The segment covering 449–468 (STAYEKQFPATSKDNFDMCS) has biased composition (polar residues).

The protein belongs to the protein kinase superfamily. CAMK Ser/Thr protein kinase family. CaMK subfamily. In terms of assembly, homodimer. Autophosphorylated. In terms of tissue distribution, highly expressed in testis, fetal lung and heart, followed by pituitary gland, kidney, interventricular septum, pancreas, heart, trachea, thyroid gland and uterus. Weak hybridization signals were observed in the following tissues: amygdala, aorta, esophagus, colon ascending, colon transverse, skeletal muscle, spleen, peripheral blood leukocyte, lymph node, bone marrow, placenta, prostate, liver, salivary gland, mammary gland, some tumor cell lines, fetal brain, fetal liver, fetal spleen and fetal thymus. No signal at all was detectable in RNA from tissues of the nervous system.

It localises to the cytoplasm. Its subcellular location is the cytoskeleton. The protein resides in the perinuclear region. It carries out the reaction L-seryl-[protein] + ATP = O-phospho-L-seryl-[protein] + ADP + H(+). The enzyme catalyses L-threonyl-[protein] + ATP = O-phospho-L-threonyl-[protein] + ADP + H(+). With respect to regulation, specifically inhibited by CDD-2807 ((3-([1,1'-Biphenyl]-2-ylethynyl)-1H-indazol-5-yl)(2,6-diazaspiro[3.5]nonan-2-yl)methanone). Its function is as follows. Serine/threonine protein kinase required for spermatid differentiation and male fertility. Promotes sperm flagella assembly during spermatogenesis by mediating phosphorylation of fibrous sheath proteins AKAP3 and AKAP4. Also phosphorylates vimentin/VIM, thereby regulating the dynamic behavior of the intermediate filament cytoskeleton. This chain is Serine/threonine-protein kinase 33, found in Homo sapiens (Human).